The sequence spans 586 residues: Transmembrane protease serine 13 (586 aa).

Disordered regions lie at residues 1–115 (MERD…VTTS) and 131–157 (PIRSSPARSAPATRATRESPGTSLPKF). At 1–165 (MERDSHGNAS…KFTWREGQKQ (165 aa)) the chain is on the cytoplasmic side. A 1-1 repeat occupies 9–13 (ASPAR). A 13 X 5 AA repeats of A-S-P-A-[GLQR] region spans residues 9-93 (ASPARTPSAG…ASPARASPAL (85 aa)). One copy of the 2-1; approximate repeat lies at 14–18 (TPSAG). Low complexity predominate over residues 14 to 52 (TPSAGASPAQASPAGTPPGRASPAQASPAQASPAGTPPG). The 4 X 5 AA repeats of T-P-P-G-R stretch occupies residues 14–68 (TPSAGASPAQASPAGTPPGRASPAQASPAQASPAGTPPGRASPAQASPAGTPPGR). 10 consecutive repeat copies span residues 19–23 (ASPAQ), 24–28 (ASPAG), 29–33 (TPPGR), 34–38 (ASPAQ), 39–43 (ASPAQ), 44–48 (ASPAG), 49–53 (TPPGR), 54–58 (ASPAQ), 59–63 (ASPAG), and 64–68 (TPPGR). One copy of the 1-9; approximate repeat lies at 69-78 (ASPGRASPAQ). Low complexity-rich tracts occupy residues 69–111 (ASPG…RSAS) and 133–144 (RSSPARSAPATR). 3 repeat units span residues 79–83 (ASPAQ), 84–88 (ASPAR), and 89–93 (ASPAL). The chain crosses the membrane as a helical; Signal-anchor for type II membrane protein span at residues 166–186 (LPLIGCVLLLIALVVSLIILF). Over 187-586 (QFWQGHTGIR…GGDPGGAPRL (400 aa)) the chain is Extracellular. The SRCR domain maps to 195–325 (IRYKEQRESC…HCGLRAMTGR (131 aa)). An LDL-receptor class A domain is found at 204 to 226 (CPKHAVRCDGVVDCKLKSDELGC). Cystine bridges form between Cys-250-Cys-314, Cys-263-Cys-317, and Cys-351-Cys-367. N-linked (GlcNAc...) asparagine glycans are attached at residues Asn-255 and Asn-292. In terms of domain architecture, Peptidase S1 spans 326–559 (IVGGALASDS…VLPWIYSKME (234 aa)). Catalysis depends on His-366, which acts as the Charge relay system. N-linked (GlcNAc...) asparagine glycosylation is present at Asn-405. Asp-414 acts as the Charge relay system in catalysis. An N-linked (GlcNAc...) asparagine glycan is attached at Asn-445. 3 disulfides stabilise this stretch: Cys-448/Cys-517, Cys-480/Cys-496, and Cys-507/Cys-535. Residue Ser-511 is the Charge relay system of the active site. Over residues 565–574 (QDTAPSRLGT) the composition is skewed to polar residues. The interval 565–586 (QDTAPSRLGTSSGGDPGGAPRL) is disordered. Gly residues predominate over residues 575 to 586 (SSGGDPGGAPRL).

Belongs to the peptidase S1 family. As to quaternary structure, interacts with SPINT1/HAI-1; the interaction promotes the phosphorylation and cell membrane localization of TMPRSS13. Interacts with SPINT2/HAI-2; the interaction promotes the phosphorylation and cell membrane localization of TMPRSS13. The inactive zymogen is post-translationally modified and then trafficked to the cell surface, whereby it undergoes autocatalytic cleavage resulting in an activated form that is released extracellularly. In terms of processing, phosphorylation is required for localization at the cell surface. Phosphorylation increases following inhibition of protease activity by SPINT2/HAI-2. Post-translationally, N-glycosylation of Asn-405 and Asn-445 is required for exit from the endoplasmic reticulum and trafficking to the cell surface. Also required for autocleavage of the zymogen, activation and secretion of the mature protein. Expressed in placenta. As to expression, predominantly expressed in lung, placenta, pancreas, and prostate. In terms of tissue distribution, expressed in lung, placenta, pancreas, and prostate. Weakly expressed in testis and peripheral blood lymphocytes.

It is found in the cell membrane. Its subcellular location is the secreted. The protein resides in the cytoplasm. Cleavage of HGF is inhibited by SPINT1/HAI-1 via the BPTI/Kunitz inhibitor 1 domain. In terms of biological role, serine protease. Cleaves the proform of PRSS8/prostasin to form the active protein. Cleaves the proform of HGF to form the active protein which promotes MAPK signaling. Promotes the formation of the stratum corneum and subsequently the epidermal barrier in embryos. The sequence is that of Transmembrane protease serine 13 (TMPRSS13) from Homo sapiens (Human).